A 416-amino-acid polypeptide reads, in one-letter code: Deferrochelatase (416 aa).

A signal peptide (tat-type signal) is located at residues 1-28 (MSDEQKKPEQIHRRDILKWGAMAGAAVA). 241–243 (GTG) lines the heme b pocket. The tract at residues 293–318 (QEDTFGRRKSSGAPFGQKKETDPVKL) is disordered. The heme b site is built by His326 and Arg339.

The protein belongs to the DyP-type peroxidase family. As to quaternary structure, component of the iron transporter efeUOB/M complex composed of EfeU, EfeM and EfeB; EfeU is essential for the complex formation. Requires heme b as cofactor. Exported by the Tat system. The position of the signal peptide cleavage has not been experimentally proven.

It localises to the secreted. The protein resides in the cell membrane. It carries out the reaction heme b + 2 H(+) = protoporphyrin IX + Fe(2+). The catalysed reaction is 2 Fe(2+) + H2O2 + 2 H(+) = 2 Fe(3+) + 2 H2O. Involved in the recovery of exogenous heme iron. Extracts iron from heme while preserving the protoporphyrin ring intact. Part of the iron transporter system efeUOB/M involved in iron import. Catalyzes the peroxide-mediated oxidation of Fe(2+) into Fe(3+); EfeM binds Fe(3+) and delivers it to the cell membrane permease EfeU. The chain is Deferrochelatase from Bacillus subtilis (strain 168).